A 196-amino-acid polypeptide reads, in one-letter code: Holliday junction branch migration complex subunit RuvA (196 aa).

Residues 1-69 are domain I; it reads MIVGLRGTII…EDAHLLFGFC (69 aa). The segment at 70-148 is domain II; the sequence is EEIEKQTFER…QLLQSQEESI (79 aa). The tract at residues 149–157 is flexible linker; sequence APSNNLKYE. Positions 157-196 are domain III; sequence EASLALQSLGFKRNEIQKVLEHIEALSVSEIVKEALKRLA.

This sequence belongs to the RuvA family. In terms of assembly, homotetramer. Forms an RuvA(8)-RuvB(12)-Holliday junction (HJ) complex. HJ DNA is sandwiched between 2 RuvA tetramers; dsDNA enters through RuvA and exits via RuvB. An RuvB hexamer assembles on each DNA strand where it exits the tetramer. Each RuvB hexamer is contacted by two RuvA subunits (via domain III) on 2 adjacent RuvB subunits; this complex drives branch migration. In the full resolvosome a probable DNA-RuvA(4)-RuvB(12)-RuvC(2) complex forms which resolves the HJ.

It localises to the cytoplasm. The RuvA-RuvB-RuvC complex processes Holliday junction (HJ) DNA during genetic recombination and DNA repair, while the RuvA-RuvB complex plays an important role in the rescue of blocked DNA replication forks via replication fork reversal (RFR). RuvA specifically binds to HJ cruciform DNA, conferring on it an open structure. The RuvB hexamer acts as an ATP-dependent pump, pulling dsDNA into and through the RuvAB complex. HJ branch migration allows RuvC to scan DNA until it finds its consensus sequence, where it cleaves and resolves the cruciform DNA. The protein is Holliday junction branch migration complex subunit RuvA of Helicobacter hepaticus (strain ATCC 51449 / 3B1).